A 655-amino-acid chain; its full sequence is Probable inactive receptor kinase At1g48480 (655 aa).

Positions 1-32 are cleaved as a signal peptide; it reads MRVFFFPNSSMAILSVFLSLLLLSLPLPSTQD. 6 LRR repeats span residues 71-95, 98-120, 122-144, 146-169, 170-192, and 194-215; these read SNRVTALRLPGVALSGDIPEGIFGN, QLRTLSLRLNALSGSLPKDLSTS, NLRHLYLQGNRFSGEIPEVLFSL, HLVRLNLASNSFTGEISSGFTNLT, KLKTLFLENNQLSGSIPDLDLPL, and QFNVSNNSLNGSIPKNLQRFES. The tract at residues 234 to 260 is disordered; it reads EETVPSQPTSGGNRTPPSVEGSEEKKK. Over residues 237–249 the composition is skewed to polar residues; sequence VPSQPTSGGNRTP. Residues 269–289 traverse the membrane as a helical segment; the sequence is IAGIVIGCVVGFALIVLILMV. A Protein kinase domain is found at 371-646; sequence RASAEVLGKG…RKMENLRPYS (276 aa). Position 373 is a phosphoserine (serine 373). 377–385 contacts ATP; sequence LGKGTFGTA. Threonine 394 is subject to Phosphothreonine. ATP is bound at residue lysine 399. A Phosphoserine modification is found at serine 450. Phosphothreonine is present on threonine 526. Phosphoserine is present on serine 546. Threonine 622 is modified (phosphothreonine).

It belongs to the protein kinase superfamily. In terms of tissue distribution, highly expressed in seedlings and leaves. Lower expression in roots, stems, flowers and siliques. Detected in the vascular tissues of roots, in the trichomes of young rosettes leaves and hydathodes, in the floral abscission zones, in filament apex and stomata cells of anthers, in inflorescence stems and in sepals.

The protein localises to the cell membrane. This chain is Probable inactive receptor kinase At1g48480 (RKL1), found in Arabidopsis thaliana (Mouse-ear cress).